The chain runs to 222 residues: GTP cyclohydrolase 1 (222 aa).

Zn(2+) contacts are provided by Cys111, His114, and Cys182.

Belongs to the GTP cyclohydrolase I family. As to quaternary structure, homomer.

It carries out the reaction GTP + H2O = 7,8-dihydroneopterin 3'-triphosphate + formate + H(+). Its pathway is cofactor biosynthesis; 7,8-dihydroneopterin triphosphate biosynthesis; 7,8-dihydroneopterin triphosphate from GTP: step 1/1. The chain is GTP cyclohydrolase 1 from Salmonella gallinarum (strain 287/91 / NCTC 13346).